Reading from the N-terminus, the 145-residue chain is Hemoglobin subunit beta-A (145 aa).

The Globin domain maps to 1 to 145; it reads MLTAEEKAAV…VANALAHRYH (145 aa). Residues His-62 and His-91 each contribute to the heme b site.

The protein belongs to the globin family. As to quaternary structure, heterotetramer of two alpha chains and two beta chains. As to expression, red blood cells.

In terms of biological role, involved in oxygen transport from the lung to the various peripheral tissues. The protein is Hemoglobin subunit beta-A of Capra hircus (Goat).